Consider the following 82-residue polypeptide: Probable glutamyl-tRNA(Gln) amidotransferase subunit C (82 aa).

This sequence belongs to the GatC family. Heterotrimer of A, B and C subunits.

It carries out the reaction L-glutamyl-tRNA(Gln) + L-glutamine + ATP + H2O = L-glutaminyl-tRNA(Gln) + L-glutamate + ADP + phosphate + H(+). It catalyses the reaction L-aspartyl-tRNA(Asn) + L-glutamine + ATP + H2O = L-asparaginyl-tRNA(Asn) + L-glutamate + ADP + phosphate + 2 H(+). Its function is as follows. Allows the formation of correctly charged Asn-tRNA(Asn) or Gln-tRNA(Gln) through the transamidation of misacylated Asp-tRNA(Asn) or Glu-tRNA(Gln) in organisms which lack either or both of asparaginyl-tRNA or glutaminyl-tRNA synthetases. The reaction takes place in the presence of glutamine and ATP through an activated phospho-Asp-tRNA(Asn) or phospho-Glu-tRNA(Gln). In Methanocaldococcus jannaschii (strain ATCC 43067 / DSM 2661 / JAL-1 / JCM 10045 / NBRC 100440) (Methanococcus jannaschii), this protein is Probable glutamyl-tRNA(Gln) amidotransferase subunit C.